The chain runs to 334 residues: Glyoxylate reductase (334 aa).

NADP(+) is bound by residues 158–161 (LGRI), 180–182 (SRT), and 239–241 (IAR). Residues R241 and E270 contribute to the active site. H288 functions as the Proton donor in the catalytic mechanism. Residue 288–290 (HIG) participates in NADP(+) binding.

It belongs to the D-isomer specific 2-hydroxyacid dehydrogenase family. GyaR subfamily. As to quaternary structure, homodimer.

The protein localises to the cytoplasm. The catalysed reaction is glycolate + NAD(+) = glyoxylate + NADH + H(+). The protein is Glyoxylate reductase (gyaR) of Pyrococcus horikoshii (strain ATCC 700860 / DSM 12428 / JCM 9974 / NBRC 100139 / OT-3).